The chain runs to 160 residues: MSDEEHHFESKADAGASKTYPQQAGTIRKNGYIVIKGRPCKVVEVSTSKTGKHGHAKCHFVAIDIFNGKKLEDIVPSSHNCDVPHVNRTDYQLIDISEDGFVSLLTESGNTKDDLRLPTDESLLKQVKDGFQEGKDLVVSVMSAMGEEQINAIKDIGTKN.

Positions 1 to 12 (MSDEEHHFESKA) are enriched in basic and acidic residues. The segment at 1-21 (MSDEEHHFESKADAGASKTYP) is disordered. Hypusine is present on K52.

This sequence belongs to the eIF-5A family. Lys-52 undergoes hypusination, a unique post-translational modification that consists in the addition of a butylamino group from spermidine to lysine side chain, leading to the formation of the unusual amino acid hypusine. eIF-5As are the only known proteins to undergo this modification, which is essential for their function.

Functionally, translation factor that promotes translation elongation and termination, particularly upon ribosome stalling at specific amino acid sequence contexts. Binds between the exit (E) and peptidyl (P) site of the ribosome and promotes rescue of stalled ribosome: specifically required for efficient translation of polyproline-containing peptides as well as other motifs that stall the ribosome. Acts as a ribosome quality control (RQC) cofactor by joining the RQC complex to facilitate peptidyl transfer during CAT tailing step. The sequence is that of Eukaryotic translation initiation factor 5A-3 (EIF5A3) from Solanum tuberosum (Potato).